The primary structure comprises 430 residues: Glutamate-1-semialdehyde 2,1-aminomutase (430 aa).

The residue at position 265 (Lys265) is an N6-(pyridoxal phosphate)lysine.

It belongs to the class-III pyridoxal-phosphate-dependent aminotransferase family. HemL subfamily. In terms of assembly, homodimer. The cofactor is pyridoxal 5'-phosphate.

Its subcellular location is the cytoplasm. The enzyme catalyses (S)-4-amino-5-oxopentanoate = 5-aminolevulinate. It functions in the pathway porphyrin-containing compound metabolism; protoporphyrin-IX biosynthesis; 5-aminolevulinate from L-glutamyl-tRNA(Glu): step 2/2. In Shewanella baltica (strain OS155 / ATCC BAA-1091), this protein is Glutamate-1-semialdehyde 2,1-aminomutase.